A 348-amino-acid polypeptide reads, in one-letter code: Phage-like element PBSX protein XkdT (348 aa).

The protein belongs to the Mu gp47/PBSX XkdT family.

The sequence is that of Phage-like element PBSX protein XkdT (xkdT) from Bacillus subtilis (strain 168).